The primary structure comprises 216 residues: MMNKIHKDNRGVLIVISGPSGAGKGTICKALLEKHDDIFISVSATTRNPRVGEVDGVNYHFLTKEEFKQRIAEDDFLEHAEVYGNYYGTPKSSVEKMLDEGKNVILEIDIQGALKVKEKATDGVFIFILPPSMEELKQRIIKRGSETPESLMTRFKSAYKEINYVSKYNYAVVNDNVEDAVKKIEAILLAEKCRVDRLKENLLESKEDEMHEQLYD.

Residues 11 to 189 (GVLIVISGPS…AVKKIEAILL (179 aa)) enclose the Guanylate kinase-like domain. 18-25 (GPSGAGKG) contributes to the ATP binding site.

The protein belongs to the guanylate kinase family.

Its subcellular location is the cytoplasm. The catalysed reaction is GMP + ATP = GDP + ADP. Essential for recycling GMP and indirectly, cGMP. The chain is Guanylate kinase from Clostridium perfringens (strain ATCC 13124 / DSM 756 / JCM 1290 / NCIMB 6125 / NCTC 8237 / Type A).